The primary structure comprises 101 residues: MRTPKRTRSPKTKVSLRGETLTLQLTTVSLDTRHMVKRCDERHGRPLPHSQESQHGSATSKKAVRGTADTAPLERISAARGWALPMEATVSVFRAHQWQWN.

The segment at 39–74 (CDERHGRPLPHSQESQHGSATSKKAVRGTADTAPLE) is disordered. Polar residues predominate over residues 50–60 (SQESQHGSATS).

This is an uncharacterized protein from Homo sapiens (Human).